We begin with the raw amino-acid sequence, 105 residues long: Wound-induced protein 1 (105 aa).

To potato anionic peroxidase. As to expression, ubiquitous.

This chain is Wound-induced protein 1 (WUN1), found in Solanum tuberosum (Potato).